We begin with the raw amino-acid sequence, 169 residues long: S-ribosylhomocysteine lyase (169 aa).

3 residues coordinate Fe cation: His-54, His-58, and Cys-128.

It belongs to the LuxS family. In terms of assembly, homodimer. The cofactor is Fe cation.

It catalyses the reaction S-(5-deoxy-D-ribos-5-yl)-L-homocysteine = (S)-4,5-dihydroxypentane-2,3-dione + L-homocysteine. In terms of biological role, involved in the synthesis of autoinducer 2 (AI-2) which is secreted by bacteria and is used to communicate both the cell density and the metabolic potential of the environment. The regulation of gene expression in response to changes in cell density is called quorum sensing. Catalyzes the transformation of S-ribosylhomocysteine (RHC) to homocysteine (HC) and 4,5-dihydroxy-2,3-pentadione (DPD). In Shewanella baltica (strain OS223), this protein is S-ribosylhomocysteine lyase.